We begin with the raw amino-acid sequence, 514 residues long: Bifunctional purine biosynthesis protein PurH (514 aa).

The MGS-like domain occupies 1–145; that stretch reads MIKRALISVS…KNYQDVAVIV (145 aa).

This sequence belongs to the PurH family.

It carries out the reaction (6R)-10-formyltetrahydrofolate + 5-amino-1-(5-phospho-beta-D-ribosyl)imidazole-4-carboxamide = 5-formamido-1-(5-phospho-D-ribosyl)imidazole-4-carboxamide + (6S)-5,6,7,8-tetrahydrofolate. The catalysed reaction is IMP + H2O = 5-formamido-1-(5-phospho-D-ribosyl)imidazole-4-carboxamide. It participates in purine metabolism; IMP biosynthesis via de novo pathway; 5-formamido-1-(5-phospho-D-ribosyl)imidazole-4-carboxamide from 5-amino-1-(5-phospho-D-ribosyl)imidazole-4-carboxamide (10-formyl THF route): step 1/1. It functions in the pathway purine metabolism; IMP biosynthesis via de novo pathway; IMP from 5-formamido-1-(5-phospho-D-ribosyl)imidazole-4-carboxamide: step 1/1. The polypeptide is Bifunctional purine biosynthesis protein PurH (Ruminiclostridium cellulolyticum (strain ATCC 35319 / DSM 5812 / JCM 6584 / H10) (Clostridium cellulolyticum)).